Here is a 184-residue protein sequence, read N- to C-terminus: Large ribosomal subunit protein uL6 (184 aa).

It belongs to the universal ribosomal protein uL6 family. Part of the 50S ribosomal subunit.

This protein binds to the 23S rRNA, and is important in its secondary structure. It is located near the subunit interface in the base of the L7/L12 stalk, and near the tRNA binding site of the peptidyltransferase center. This chain is Large ribosomal subunit protein uL6, found in Thermotoga maritima (strain ATCC 43589 / DSM 3109 / JCM 10099 / NBRC 100826 / MSB8).